Reading from the N-terminus, the 476-residue chain is Light-independent protochlorophyllide reductase subunit N (476 aa).

Cysteine 31, cysteine 56, and cysteine 116 together coordinate [4Fe-4S] cluster.

It belongs to the BchN/ChlN family. As to quaternary structure, protochlorophyllide reductase is composed of three subunits; ChlL, ChlN and ChlB. Forms a heterotetramer of two ChlB and two ChlN subunits. Requires [4Fe-4S] cluster as cofactor.

Its subcellular location is the plastid. It is found in the chloroplast. The catalysed reaction is chlorophyllide a + oxidized 2[4Fe-4S]-[ferredoxin] + 2 ADP + 2 phosphate = protochlorophyllide a + reduced 2[4Fe-4S]-[ferredoxin] + 2 ATP + 2 H2O. It functions in the pathway porphyrin-containing compound metabolism; chlorophyll biosynthesis (light-independent). Component of the dark-operative protochlorophyllide reductase (DPOR) that uses Mg-ATP and reduced ferredoxin to reduce ring D of protochlorophyllide (Pchlide) to form chlorophyllide a (Chlide). This reaction is light-independent. The NB-protein (ChlN-ChlB) is the catalytic component of the complex. The sequence is that of Light-independent protochlorophyllide reductase subunit N from Staurastrum punctulatum (Green alga).